We begin with the raw amino-acid sequence, 294 residues long: MNFFQAIFLGLVQALTEYLPVSSSAHIRIIGDLMLGSDPGAAFTAIIQIGTELAVILYFRHDIIRILGAWFGSLFGKEGKDFKSRMGAHNRDTQMGWFIIIGTLPILIAGLLFKDAIESTLRNLWITVTVLIIFGILLWVVDARAKQVKTMDEMTWKDALIFGIGQMLALIPGVSRSGGTITFGRAMGYTREAAVRVSFLMAIPAVFGAGILEAVSAVKDVAAGNAGMFPGWGATIAATIVAFVVGYVVIIGFLKFVSTFSYKAFAIYRIALAVVVALLLICGVLHPTEVVAAA.

A run of 6 helical transmembrane segments spans residues Pro39–Phe59, Thr93–Phe113, Asn123–Ala143, Val197–Ala217, Ala234–Leu254, and Phe265–Leu285.

It belongs to the UppP family.

Its subcellular location is the cell membrane. It carries out the reaction di-trans,octa-cis-undecaprenyl diphosphate + H2O = di-trans,octa-cis-undecaprenyl phosphate + phosphate + H(+). Functionally, catalyzes the dephosphorylation of undecaprenyl diphosphate (UPP). Confers resistance to bacitracin. The sequence is that of Undecaprenyl-diphosphatase from Bifidobacterium adolescentis (strain ATCC 15703 / DSM 20083 / NCTC 11814 / E194a).